The primary structure comprises 925 residues: Nuclear factor of activated T-cells, cytoplasmic 2 (925 aa).

Residues 1–95 (MNAPERQPQP…FGEPDRVGPQ (95 aa)) are disordered. Serine 23 bears the Phosphoserine mark. The 9aaTAD motif lies at 26-34 (DELDFSILF). 3 positions are modified to phosphoserine: serine 99, serine 107, and serine 110. The interval 111-116 (PRIEIT) is calcineurin-binding. The transactivation domain A (TAD-A) stretch occupies residues 119–199 (HELIQAVGPL…CVSPNNGGPD (81 aa)). Phosphoserine is present on residues serine 148, serine 168, serine 171, serine 172, serine 174, serine 175, serine 177, and serine 180. The tract at residues 161-175 (YREPLCLSPASSGSS) is required for cytoplasmic retention of the phosphorylated form. Tandem repeats lie at residues 184 to 200 (SPYTSPCVSPNNGGPDD) and 213 to 229 (SPRTSPIMSPRTSLAED). A 3 X approximate SP repeats region spans residues 184–286 (SPYTSPCVSP…PQPSSHVAPQ (103 aa)). Positions 195–297 (NGGPDDLCPQ…HGSPAGYPPV (103 aa)) are disordered. Phosphoserine is present on residues serine 213, serine 217, serine 221, serine 236, and serine 243. The span at 214 to 224 (PRTSPIMSPRT) shows a compositional bias: polar residues. Positions 251 to 253 (KRR) match the Nuclear localization signal motif. A phosphoserine mark is found at serine 255, serine 268, serine 274, serine 276, serine 280, serine 326, serine 330, and serine 363. Low complexity predominate over residues 264–281 (PPGASPQRSRSPSPQPSS). The stretch at 272–286 (SRSPSPQPSSHVAPQ) is one 3; approximate repeat. The region spanning 392 to 574 (ASLPPLEWPL…NPIECSQRSA (183 aa)) is the RHD domain. Residues 421–428 (RAHYETEG) mediate DNA binding. The short motif at 664-666 (KRK) is the Nuclear localization signal element. Phosphoserine is present on residues serine 755, serine 757, serine 759, serine 856, and serine 859. The interval 839 to 894 (PGTTRPGPPPVSQGQRLSPGSYPTVIQQQNATSQRAAKNGPPVSDQKEVLPAGVTI) is disordered. Residues 862-874 (TVIQQQNATSQRA) show a composition bias toward polar residues. A Nuclear export signal motif is present at residues 904–913 (YLDDVNEIIR).

Member of the multicomponent NFATC transcription complex that consists of at least two components, a pre-existing cytoplasmic component NFATC2 and an inducible nuclear component NFATC1. Other members such as NFATC4, NFATC3 or members of the activating protein-1 family, MAF, GATA4 and Cbp/p300 can also bind the complex. The phosphorylated form specifically interacts with XPO1; which mediates nuclear export. NFATC proteins bind to DNA as monomers. Interacts with NFATC2IP. Interacts with FOXP3. Interacts with TBX21 ('Thr-303' phosphorylated form). Interacts with KAT2A. Interacts with HOMER2 and HOMER3; this interaction competes with calcineurin/PPP3CA-binding and hence prevents NFATC2 dephosphorylation and activation. Interacts with protein phosphatase PPP3CA/calcineurin A. Interacts with AKAP5 (via leucine zipper domain); this is required for NFATC2/NFAT1 recruitment to CRAC channels. In terms of processing, in resting cells, phosphorylated by NFATC-kinase on at least 18 sites in the 99-363 region. Upon cell stimulation, all these sites except Ser-243 are dephosphorylated by calcineurin. Dephosphorylation induces a conformational change that simultaneously exposes an NLS and masks an NES, which results in nuclear localization. Simultaneously, Ser-53 or Ser-56 is phosphorylated; which is required for full transcriptional activity. Post-translationally, ubiquitinated in endothelial cells by RNF213 downstream of the non-canonical Wnt signaling pathway, leading to its degradation by the proteasome. In terms of tissue distribution, expressed in thymus, spleen, heart, testis, brain, placenta, muscle and pancreas. Isoform 1 is highly expressed in the small intestine, heart, testis, prostate, thymus, placenta and thyroid. Isoform 3 is highly expressed in stomach, uterus, placenta, trachea and thyroid.

It localises to the cytoplasm. The protein resides in the nucleus. Plays a role in the inducible expression of cytokine genes in T-cells, especially in the induction of the IL-2, IL-3, IL-4, TNF-alpha or GM-CSF. Promotes invasive migration through the activation of GPC6 expression and WNT5A signaling pathway. Is involved in the negative regulation of chondrogenesis. Recruited by AKAP5 to ORAI1 pore-forming subunit of CRAC channels in Ca(2+) signaling microdomains where store-operated Ca(2+) influx is coupled to calmodulin and calcineurin signaling and activation of NFAT-dependent transcriptional responses. The polypeptide is Nuclear factor of activated T-cells, cytoplasmic 2 (NFATC2) (Homo sapiens (Human)).